The primary structure comprises 207 residues: LexA repressor (207 aa).

The H-T-H motif DNA-binding region spans 28–48 (RAEISRELGFKSANAAEEHLK). Residues Ser-123 and Lys-160 each act as for autocatalytic cleavage activity in the active site.

This sequence belongs to the peptidase S24 family. As to quaternary structure, homodimer.

It carries out the reaction Hydrolysis of Ala-|-Gly bond in repressor LexA.. Represses a number of genes involved in the response to DNA damage (SOS response), including recA and lexA. In the presence of single-stranded DNA, RecA interacts with LexA causing an autocatalytic cleavage which disrupts the DNA-binding part of LexA, leading to derepression of the SOS regulon and eventually DNA repair. The chain is LexA repressor from Haemophilus influenzae (strain ATCC 51907 / DSM 11121 / KW20 / Rd).